Consider the following 179-residue polypeptide: Peptidyl-tRNA hydrolase (179 aa).

Tyr-15 is a tRNA binding site. Catalysis depends on His-20, which acts as the Proton acceptor. Tyr-66, Asn-68, and Asn-114 together coordinate tRNA.

Belongs to the PTH family. In terms of assembly, monomer.

Its subcellular location is the cytoplasm. The catalysed reaction is an N-acyl-L-alpha-aminoacyl-tRNA + H2O = an N-acyl-L-amino acid + a tRNA + H(+). In terms of biological role, hydrolyzes ribosome-free peptidyl-tRNAs (with 1 or more amino acids incorporated), which drop off the ribosome during protein synthesis, or as a result of ribosome stalling. Functionally, catalyzes the release of premature peptidyl moieties from peptidyl-tRNA molecules trapped in stalled 50S ribosomal subunits, and thus maintains levels of free tRNAs and 50S ribosomes. This chain is Peptidyl-tRNA hydrolase, found in Chlamydia trachomatis serovar L2 (strain ATCC VR-902B / DSM 19102 / 434/Bu).